The following is a 443-amino-acid chain: 3-isopropylmalate dehydratase large subunit (443 aa).

The [4Fe-4S] cluster site is built by cysteine 347, cysteine 407, and cysteine 410.

Belongs to the aconitase/IPM isomerase family. LeuC type 1 subfamily. In terms of assembly, heterodimer of LeuC and LeuD. [4Fe-4S] cluster serves as cofactor.

The catalysed reaction is (2R,3S)-3-isopropylmalate = (2S)-2-isopropylmalate. The protein operates within amino-acid biosynthesis; L-leucine biosynthesis; L-leucine from 3-methyl-2-oxobutanoate: step 2/4. Functionally, catalyzes the isomerization between 2-isopropylmalate and 3-isopropylmalate, via the formation of 2-isopropylmaleate. This is 3-isopropylmalate dehydratase large subunit from Buchnera aphidicola subsp. Uroleucon sonchi.